The sequence spans 582 residues: V-type ATP synthase alpha chain (582 aa).

231–238 (GPFGSGKT) serves as a coordination point for ATP.

The protein belongs to the ATPase alpha/beta chains family.

The catalysed reaction is ATP + H2O + 4 H(+)(in) = ADP + phosphate + 5 H(+)(out). Its function is as follows. Produces ATP from ADP in the presence of a proton gradient across the membrane. The V-type alpha chain is a catalytic subunit. The chain is V-type ATP synthase alpha chain from Deinococcus geothermalis (strain DSM 11300 / CIP 105573 / AG-3a).